A 525-amino-acid polypeptide reads, in one-letter code: GMP synthase [glutamine-hydrolyzing] (525 aa).

Residues arginine 9–leucine 207 enclose the Glutamine amidotransferase type-1 domain. Cysteine 86 serves as the catalytic Nucleophile. Catalysis depends on residues histidine 181 and glutamate 183. The region spanning tryptophan 208–arginine 400 is the GMPS ATP-PPase domain. Position 235 to 241 (serine 235 to serine 241) interacts with ATP.

Homodimer.

It carries out the reaction XMP + L-glutamine + ATP + H2O = GMP + L-glutamate + AMP + diphosphate + 2 H(+). The protein operates within purine metabolism; GMP biosynthesis; GMP from XMP (L-Gln route): step 1/1. Its function is as follows. Catalyzes the synthesis of GMP from XMP. In Sodalis glossinidius (strain morsitans), this protein is GMP synthase [glutamine-hydrolyzing].